A 108-amino-acid polypeptide reads, in one-letter code: Phosphoribosyl-ATP pyrophosphatase (108 aa).

It belongs to the PRA-PH family.

It is found in the cytoplasm. The enzyme catalyses 1-(5-phospho-beta-D-ribosyl)-ATP + H2O = 1-(5-phospho-beta-D-ribosyl)-5'-AMP + diphosphate + H(+). The protein operates within amino-acid biosynthesis; L-histidine biosynthesis; L-histidine from 5-phospho-alpha-D-ribose 1-diphosphate: step 2/9. The chain is Phosphoribosyl-ATP pyrophosphatase from Dechloromonas aromatica (strain RCB).